The following is a 416-amino-acid chain: Serine hydroxymethyltransferase (416 aa).

(6S)-5,6,7,8-tetrahydrofolate contacts are provided by residues Leu121 and 125 to 127 (GHL). Residue Lys229 is modified to N6-(pyridoxal phosphate)lysine.

The protein belongs to the SHMT family. Homodimer. The cofactor is pyridoxal 5'-phosphate.

Its subcellular location is the cytoplasm. The enzyme catalyses (6R)-5,10-methylene-5,6,7,8-tetrahydrofolate + glycine + H2O = (6S)-5,6,7,8-tetrahydrofolate + L-serine. It participates in one-carbon metabolism; tetrahydrofolate interconversion. Its pathway is amino-acid biosynthesis; glycine biosynthesis; glycine from L-serine: step 1/1. Functionally, catalyzes the reversible interconversion of serine and glycine with tetrahydrofolate (THF) serving as the one-carbon carrier. This reaction serves as the major source of one-carbon groups required for the biosynthesis of purines, thymidylate, methionine, and other important biomolecules. Also exhibits THF-independent aldolase activity toward beta-hydroxyamino acids, producing glycine and aldehydes, via a retro-aldol mechanism. The sequence is that of Serine hydroxymethyltransferase from Neisseria meningitidis serogroup C (strain 053442).